The primary structure comprises 1626 residues: Collagen alpha-1(XXII) chain (1626 aa).

The first 27 residues, 1–27 (MAGLRGNAVAGLLWMLLLWSGGGGCQA), serve as a signal peptide directing secretion. Residues 38-213 (DLVFLLDTSS…NAIDKIRGKL (176 aa)) enclose the VWFA domain. The Laminin G-like domain maps to 239–427 (GTKEITGFDL…LQRIVIYCDS (189 aa)). An N-linked (GlcNAc...) asparagine glycan is attached at Asn375. 16 consecutive Collagen-like domains span residues 481 to 520 (GEKG…GDVG), 526 to 565 (QGEK…PGEV), 566 to 625 (GMRG…PGPS), 657 to 708 (GEQG…GIPG), 714 to 773 (GPPG…PGER), 774 to 833 (GEDG…PGLK), 868 to 922 (GPKG…GAPG), 925 to 984 (GAPG…PGKG), 1047 to 1095 (AGPP…PGKP), 1118 to 1155 (PPGP…AGPP), 1156 to 1215 (GLPG…AGPP), 1249 to 1308 (GKPG…PGKD), 1315 to 1374 (GPQG…PGEK), 1387 to 1446 (GEPG…PGPP), 1495 to 1550 (SQGR…PGAP), and 1575 to 1604 (DGLP…PPGQ). Disordered stretches follow at residues 506–1002 (PVGA…GPLG), 1019–1103 (GGQC…LLSP), 1119–1458 (PGPP…RGES), and 1491–1609 (YMKS…DPSQ). The segment covering 544–553 (DGSKGMRGEP) has biased composition (basic and acidic residues). Residues 571 to 580 (QGPPGLPGPP) show a composition bias toward pro residues. Residues 591 to 606 (ERGEKGTRGEKGERGL) show a composition bias toward basic and acidic residues. The span at 661-670 (APGPRGHQGA) shows a compositional bias: low complexity. 2 stretches are compositionally biased toward pro residues: residues 715–728 (PPGP…PGPG) and 742–751 (KPGPPGPTGP). 2 stretches are compositionally biased toward basic and acidic residues: residues 769–778 (EPGERGEDGL) and 815–826 (RGEKGDQGEKGE). The segment covering 908-939 (AHGAPGAAGNPGAPGHVGAPGPSGPPGSVGAP) has biased composition (low complexity). A compositionally biased stretch (basic and acidic residues) spans 945-957 (PGKDGERGEKGAA). 2 stretches are compositionally biased toward low complexity: residues 959–974 (EEGS…DPGA) and 1056–1065 (PGDKGSPGSR). 2 stretches are compositionally biased toward basic and acidic residues: residues 1131 to 1151 (KGDK…KKGE) and 1173 to 1185 (RGAD…KGDQ). Residues 1205–1223 (ADGIAGAAGPPGIQGSPGK) show a composition bias toward low complexity. Over residues 1241–1250 (EEGKEGRDGK) the composition is skewed to basic and acidic residues. Residues 1260–1275 (AGEPGLPGPEGARGPP) show a composition bias toward low complexity. The segment covering 1379–1389 (KEGVPGKPGEP) has biased composition (low complexity). Positions 1391–1404 (FKGERGDPGIKGDK) are enriched in basic and acidic residues. The span at 1405 to 1414 (GPPGGKGQPG) shows a compositional bias: gly residues. Residues 1440 to 1449 (VGPPGPPGQP) show a composition bias toward pro residues. Gly residues predominate over residues 1521–1530 (GRPGQGGLEG). Residues 1595-1604 (LPGPPGPPGQ) are compositionally biased toward pro residues.

Belongs to the fibril-associated collagens with interrupted helices (FACIT) family. As to expression, restrictive expression is observed at tissue junctions such as the myotendinous junction in skeletal and heart muscle, the articular cartilage-synovial fluid junction, or the border between the anagen hair follicle and the dermis in the skin. It is deposited in the basement membrane zone of the myotendinous junction and the hair follicle and associated with the extrafibrillar matrix in cartilage.

The protein resides in the secreted. The protein localises to the extracellular space. Its subcellular location is the extracellular matrix. It localises to the cytoplasm. In terms of biological role, acts as a cell adhesion ligand for skin epithelial cells and fibroblasts. The protein is Collagen alpha-1(XXII) chain (COL22A1) of Homo sapiens (Human).